The sequence spans 209 residues: MNIFLSYIVLGLSLSAPVGPVNAAQIDKGIKNGFWHAWIFGLGAMTADGLYMLFIYFGLSQFLTAPFVKTFLWLFGFFVLTYTGIETLKNVREPMDVRSSRGKPSYRKTFASGFLISLSNPLSILFWLGIYGSILAKTAEAYNMNQLLIYSSGIMIGILIWDFCMAITASTFRNLLHEKLLRGLTGIAGVSLLVFGFYFGYQGIKQLLG.

Transmembrane regions (helical) follow at residues 1 to 21 (MNIFLSYIVLGLSLSAPVGPV), 39 to 59 (IFGLGAMTADGLYMLFIYFGL), 62 to 82 (FLTAPFVKTFLWLFGFFVLTY), 110 to 130 (FASGFLISLSNPLSILFWLGI), 147 to 167 (LLIYSSGIMIGILIWDFCMAI), and 184 to 204 (LTGIAGVSLLVFGFYFGYQGI).

It belongs to the Rht family.

It is found in the cell membrane. The protein is Putative amino acid efflux protein YcgF (ycgF) of Bacillus subtilis (strain 168).